Consider the following 229-residue polypeptide: Prolactin (229 aa).

The signal sequence occupies residues M1–S30. C34 and C41 form a disulfide bridge. A phosphoserine mark is found at S56, S64, and S120. 2 cysteine pairs are disulfide-bonded: C88/C204 and C221/C229.

This sequence belongs to the somatotropin/prolactin family. Interacts with PRLR.

It localises to the secreted. Its function is as follows. Prolactin acts primarily on the mammary gland by promoting lactation. This is Prolactin (PRL) from Cervus elaphus (Red deer).